Reading from the N-terminus, the 496-residue chain is Cobyric acid synthase (496 aa).

The region spanning 257–447 (KINVAIILLK…MHGILDNPAV (191 aa)) is the GATase cobBQ-type domain. The active-site Nucleophile is the C338. H439 is an active-site residue.

The protein belongs to the CobB/CobQ family. CobQ subfamily.

It participates in cofactor biosynthesis; adenosylcobalamin biosynthesis. Catalyzes amidations at positions B, D, E, and G on adenosylcobyrinic A,C-diamide. NH(2) groups are provided by glutamine, and one molecule of ATP is hydrogenolyzed for each amidation. The polypeptide is Cobyric acid synthase (Parabacteroides distasonis (strain ATCC 8503 / DSM 20701 / CIP 104284 / JCM 5825 / NCTC 11152)).